Reading from the N-terminus, the 160-residue chain is Phosphopantetheine adenylyltransferase (160 aa).

Substrate is bound at residue serine 8. ATP-binding positions include 8-9 (SF) and histidine 16. Residues lysine 40, threonine 72, and arginine 86 each coordinate substrate. ATP-binding positions include 87-89 (GLR), glutamate 97, and 122-128 (YSFLSSS).

Belongs to the bacterial CoaD family. In terms of assembly, homohexamer. Requires Mg(2+) as cofactor.

It is found in the cytoplasm. The catalysed reaction is (R)-4'-phosphopantetheine + ATP + H(+) = 3'-dephospho-CoA + diphosphate. It participates in cofactor biosynthesis; coenzyme A biosynthesis; CoA from (R)-pantothenate: step 4/5. Reversibly transfers an adenylyl group from ATP to 4'-phosphopantetheine, yielding dephospho-CoA (dPCoA) and pyrophosphate. The polypeptide is Phosphopantetheine adenylyltransferase (Synechococcus sp. (strain CC9311)).